The primary structure comprises 337 residues: Holliday junction branch migration complex subunit RuvB (337 aa).

The segment at 4–186 is large ATPase domain (RuvB-L); sequence ADRLIHPQII…FGIPLRLEFY (183 aa). ATP contacts are provided by residues Arg26, Gly67, Lys70, Thr71, Thr72, 133-135, Arg176, Tyr186, and Arg223; that span reads EDY. Thr71 is a Mg(2+) binding site. A small ATPAse domain (RuvB-S) region spans residues 187–257; the sequence is NVKDLSSIVA…IAEAALDMLD (71 aa). A head domain (RuvB-H) region spans residues 260–337; that stretch reads AEGFDYMDRK…NHFNIIKPDA (78 aa). DNA is bound by residues Arg296, Arg315, and Arg320.

The protein belongs to the RuvB family. As to quaternary structure, homohexamer. Forms an RuvA(8)-RuvB(12)-Holliday junction (HJ) complex. HJ DNA is sandwiched between 2 RuvA tetramers; dsDNA enters through RuvA and exits via RuvB. An RuvB hexamer assembles on each DNA strand where it exits the tetramer. Each RuvB hexamer is contacted by two RuvA subunits (via domain III) on 2 adjacent RuvB subunits; this complex drives branch migration. In the full resolvosome a probable DNA-RuvA(4)-RuvB(12)-RuvC(2) complex forms which resolves the HJ.

It localises to the cytoplasm. It catalyses the reaction ATP + H2O = ADP + phosphate + H(+). Its function is as follows. The RuvA-RuvB-RuvC complex processes Holliday junction (HJ) DNA during genetic recombination and DNA repair, while the RuvA-RuvB complex plays an important role in the rescue of blocked DNA replication forks via replication fork reversal (RFR). RuvA specifically binds to HJ cruciform DNA, conferring on it an open structure. The RuvB hexamer acts as an ATP-dependent pump, pulling dsDNA into and through the RuvAB complex. RuvB forms 2 homohexamers on either side of HJ DNA bound by 1 or 2 RuvA tetramers; 4 subunits per hexamer contact DNA at a time. Coordinated motions by a converter formed by DNA-disengaged RuvB subunits stimulates ATP hydrolysis and nucleotide exchange. Immobilization of the converter enables RuvB to convert the ATP-contained energy into a lever motion, pulling 2 nucleotides of DNA out of the RuvA tetramer per ATP hydrolyzed, thus driving DNA branch migration. The RuvB motors rotate together with the DNA substrate, which together with the progressing nucleotide cycle form the mechanistic basis for DNA recombination by continuous HJ branch migration. Branch migration allows RuvC to scan DNA until it finds its consensus sequence, where it cleaves and resolves cruciform DNA. The chain is Holliday junction branch migration complex subunit RuvB from Shewanella halifaxensis (strain HAW-EB4).